The chain runs to 411 residues: Citrate synthase (411 aa).

Catalysis depends on residues His-304 and Asp-363.

It belongs to the citrate synthase family.

It carries out the reaction oxaloacetate + acetyl-CoA + H2O = citrate + CoA + H(+). Its pathway is carbohydrate metabolism; tricarboxylic acid cycle; isocitrate from oxaloacetate: step 1/2. This is Citrate synthase (gltA) from Rickettsia parkeri.